The chain runs to 481 residues: Probable cytosol aminopeptidase (481 aa).

Residues lysine 247 and aspartate 252 each contribute to the Mn(2+) site. Lysine 259 is an active-site residue. Aspartate 270, aspartate 329, and glutamate 331 together coordinate Mn(2+). Residue arginine 333 is part of the active site.

The protein belongs to the peptidase M17 family. It depends on Mn(2+) as a cofactor.

The protein localises to the cytoplasm. It catalyses the reaction Release of an N-terminal amino acid, Xaa-|-Yaa-, in which Xaa is preferably Leu, but may be other amino acids including Pro although not Arg or Lys, and Yaa may be Pro. Amino acid amides and methyl esters are also readily hydrolyzed, but rates on arylamides are exceedingly low.. It carries out the reaction Release of an N-terminal amino acid, preferentially leucine, but not glutamic or aspartic acids.. Its function is as follows. Presumably involved in the processing and regular turnover of intracellular proteins. Catalyzes the removal of unsubstituted N-terminal amino acids from various peptides. This chain is Probable cytosol aminopeptidase, found in Clostridium tetani (strain Massachusetts / E88).